The primary structure comprises 192 residues: MAIQLSKGQRIDLTKTNPGLTKAVIGLGWDTNKYSGGHDFDLDASAFLVDAHDNCVNDLDFVFYNNLEHPSGGVIHTGDNRTGEGDGDDEQIIVDFSKIPAHIEKIGITVTIHDAEARSQNFGQVSNAFVRVVDEETQNELLRFDLGEDFSIETAVVVCELYRHGGEWKFNAIGSGFSGGLAALCRNYGLQV.

This sequence belongs to the CAPAB/TerDEXZ family.

This is an uncharacterized protein from Bacillus subtilis (strain 168).